Reading from the N-terminus, the 264-residue chain is 2-C-methyl-D-erythritol 4-phosphate cytidylyltransferase (264 aa).

The interval 234–264 (ARDPESAHPQSSVLASAFSGPGSRVSGPEEI) is disordered.

Belongs to the IspD/TarI cytidylyltransferase family. IspD subfamily.

The enzyme catalyses 2-C-methyl-D-erythritol 4-phosphate + CTP + H(+) = 4-CDP-2-C-methyl-D-erythritol + diphosphate. The protein operates within isoprenoid biosynthesis; isopentenyl diphosphate biosynthesis via DXP pathway; isopentenyl diphosphate from 1-deoxy-D-xylulose 5-phosphate: step 2/6. Functionally, catalyzes the formation of 4-diphosphocytidyl-2-C-methyl-D-erythritol from CTP and 2-C-methyl-D-erythritol 4-phosphate (MEP). The protein is 2-C-methyl-D-erythritol 4-phosphate cytidylyltransferase of Xanthomonas euvesicatoria pv. vesicatoria (strain 85-10) (Xanthomonas campestris pv. vesicatoria).